We begin with the raw amino-acid sequence, 318 residues long: Ethyl acetate hydrolase (318 aa).

Active-site residues include S165, D261, and H291.

It belongs to the 'GDXG' lipolytic enzyme family. As to quaternary structure, monomer.

The protein localises to the cytoplasm. The catalysed reaction is ethyl acetate + H2O = ethanol + acetate + H(+). Its activity is regulated as follows. Inhibited by the serine protease inhibitor phenylmethylsulfonyl fluoride, the histidine reagent diethylpyrocarbonate and two sulfhydryl reagents, mercuric chloride and naphthol AS-D chloroacetate. Not inhibited by EDTA. Its function is as follows. Esterase that catalyzes the hydrolysis of ethyl acetate. Can also use propyl acetate and the chromogenic substrates alpha-naphthyl acetate, alpha-naphthyl propionate, alpha-naphthyl caproate and 4-nitrophenyl acetate, with a preference for short-chain aliphatic esters. Highest activity is obtained in vitro with propyl acetate, followed by ethyl acetate. In vivo, could be involved in pyoverdine biosynthesis, but its specific role and its in vivo substrate have not been identified. This chain is Ethyl acetate hydrolase, found in Pseudomonas putida (Arthrobacter siderocapsulatus).